A 250-amino-acid chain; its full sequence is 23S rRNA (guanosine-2'-O-)-methyltransferase RlmB (250 aa).

S-adenosyl-L-methionine-binding residues include G198, I218, and L227.

Belongs to the class IV-like SAM-binding methyltransferase superfamily. RNA methyltransferase TrmH family. RlmB subfamily.

It is found in the cytoplasm. It catalyses the reaction guanosine(2251) in 23S rRNA + S-adenosyl-L-methionine = 2'-O-methylguanosine(2251) in 23S rRNA + S-adenosyl-L-homocysteine + H(+). Functionally, specifically methylates the ribose of guanosine 2251 in 23S rRNA. In Coxiella burnetii (strain RSA 493 / Nine Mile phase I), this protein is 23S rRNA (guanosine-2'-O-)-methyltransferase RlmB.